We begin with the raw amino-acid sequence, 241 residues long: Ribonuclease PH (241 aa).

Residues Arg87 and 125–127 (GTR) contribute to the phosphate site.

The protein belongs to the RNase PH family. In terms of assembly, homohexameric ring arranged as a trimer of dimers.

The enzyme catalyses tRNA(n+1) + phosphate = tRNA(n) + a ribonucleoside 5'-diphosphate. Its function is as follows. Phosphorolytic 3'-5' exoribonuclease that plays an important role in tRNA 3'-end maturation. Removes nucleotide residues following the 3'-CCA terminus of tRNAs; can also add nucleotides to the ends of RNA molecules by using nucleoside diphosphates as substrates, but this may not be physiologically important. Probably plays a role in initiation of 16S rRNA degradation (leading to ribosome degradation) during starvation. This is Ribonuclease PH from Dehalococcoides mccartyi (strain ATCC BAA-2100 / JCM 16839 / KCTC 5957 / BAV1).